A 418-amino-acid chain; its full sequence is eIF5-mimic protein 2-B (418 aa).

The segment covering 1–15 (MSYQKQQKPTLTGQR) has biased composition (polar residues). The disordered stretch occupies residues 1–29 (MSYQKQQKPTLTGQRFKTRKRDEKERFDP). One can recognise a W2 domain in the interval 247 to 414 (NQQSLGARKE…KNAEEESESE (168 aa)).

Belongs to the BZW family.

In terms of biological role, translation initiation regulator which may repress repeat-associated non-AUG (RAN) initiated translation probably by acting as a competitive inhibitor of eukaryotic translation initiation factor 5 (EIF5) function. Enhances histone H4 gene transcription but does not seem to bind DNA directly. In Danio rerio (Zebrafish), this protein is eIF5-mimic protein 2-B (bzw1b).